We begin with the raw amino-acid sequence, 884 residues long: MVYFRQIFLMIIVVSLHCCKVRFFCIVANAKELDDWKVLTVENGERYRTHVGRYAGEEGGEKIKLRVLEKFRALLDLIKPSTSRRRNLAESASFSPWPAPSPSPFPNGGPIESPAYPPAPPRPIPPHLRRPLPQRTHPLEQPEIQRRKHEKGGTFKKILVPVVASTASAIGFVVCVVGVFCLCARRKRKMNGKTLSFKRKKGKSQSSTRKVSVNPTLDFLYLNSLGVDLERQNSVSVKEIRETEKDLNGINGGLLEEEVKRSIETEISHDWDNASSYSTKEIVSVHENDEEQTVNSVSVPVVVINDSSDDDESFHSVGGGSQYSNPRLSNASSASGSVNVGSSQRFSEHKLDIPECSRSDFGISVSAPPPPPPPPPPLPQFSNKRIHTLSSPETANLQTLSSQLCEKLCASSSKTSFPINVPNSQPRPPPPPPPPQQLQVAGINKTPPPPLSLDFSERRPLGKDGAPLPKLKPLHWDKVRATPDRTMVWDKLRTSSFELDEEMIESLFGYTMQSSTKNEEGKSKTPSPGKHLLEPKRLQNFTILLKALNATADQICSALGKGEGLCLQQLEALVKMVPTKEEELKLRSYKGAVDELGSAEKFLRALVGVPFAFQRAEAMLYRETFEDEVVHLRNSFSMLEEACKELKSSRLFLKLLEAVLKTGNRMNVGTIRGGAKAFKLDALLKLSDVKGTDGKTTLLHFVVQEISRSEGIRVSDSIMGRIMNQRSNKNRTPEEKEEDYRRMGLDLVSGLNTELRNVKKTATIDLEGLVTSVSNLRDGLGQLSCLASEKLKGDEENRAFVSSMSSFLRYGEKSLEELREDEKRIMERVGEIAEYFHGDVRGDEKNPLRIFVIVRDFLGMLDHVCRELRCVRVPNSPSPLAPFR.

Positions 1 to 18 (MVYFRQIFLMIIVVSLHC) are cleaved as a signal peptide. The interval 89–143 (AESASFSPWPAPSPSPFPNGGPIESPAYPPAPPRPIPPHLRRPLPQRTHPLEQPE) is disordered. Pro residues-rich tracts occupy residues 97–107 (WPAPSPSPFPN) and 115–126 (AYPPAPPRPIPP). Residues 158 to 178 (ILVPVVASTASAIGFVVCVVG) traverse the membrane as a helical segment. 3 disordered regions span residues 307-384 (SSDD…FSNK), 416-469 (SFPI…APLP), and 512-532 (MQSSTKNEEGKSKTPSPGKHL). Positions 329–343 (SNASSASGSVNVGSS) are enriched in low complexity. Basic and acidic residues predominate over residues 346 to 358 (FSEHKLDIPECSR). 2 stretches are compositionally biased toward pro residues: residues 367 to 379 (APPPPPPPPPPLP) and 425 to 436 (QPRPPPPPPPPQ). An FH2 domain is found at 461-884 (LGKDGAPLPK…NSPSPLAPFR (424 aa)).

This sequence belongs to the formin-like family. Class-I subfamily.

The protein localises to the membrane. Its function is as follows. Might be involved in the organization and polarity of the actin cytoskeleton. This chain is Formin-like protein 11 (FH11), found in Arabidopsis thaliana (Mouse-ear cress).